A 139-amino-acid polypeptide reads, in one-letter code: CLAVATA3/ESR (CLE)-related protein 1 (139 aa).

Residues 1–22 (MPNIFKILLIVLLAVVSFRLSA) form the signal peptide. The segment at 23–90 (STGDKKTAND…VPSHLTNRSM (68 aa)) is required for secretion from the host cytoplasm to the host apoplasm. Residues Asn-37 and Asn-87 are each glycosylated (N-linked (GlcNAc...) asparagine). The segment at 66-139 (AIGRSNAQGG…SPSGPDPHHH (74 aa)) is disordered. Positions 100-125 (EKGAATRVEKMRAQLRELAEKMTDKD) form a coiled coil. Basic and acidic residues predominate over residues 106 to 128 (RVEKMRAQLRELAEKMTDKDPKR). The CLE motif lies at 128–139 (RLSPSGPDPHHH).

The protein belongs to the CLV3/ESR signal peptide family. As to expression, highly expressed exclusively within the dorsal esophageal gland cell during syncytium formation in host plants (at protein level).

The protein localises to the secreted. Its subcellular location is the host cytoplasm. It localises to the host extracellular space. It is found in the extracellular space. The protein resides in the apoplast. Mimics host plant CLE extracellular signal peptides that regulate cell fate. May play a role in the differentiation or division of feeding cells (syncytia) induced in plant roots during infection. This chain is CLAVATA3/ESR (CLE)-related protein 1 (CLE1), found in Heterodera glycines (Soybean cyst nematode worm).